The following is a 469-amino-acid chain: MEERKNYMDRLAEALTRRKVQLDRDILPKALEQYRVQVTAVKAIRSNLLQKGFLHDDAYKYDSKMTEIELPETSPYGENEKPMVIGSRLSHYQTMLGFLDNYYRFDSEFLIPKRIAKLVALNGTFMWKDFTATTKDANTRGLFDIVQSFYGAADPISIGLVRDSLQYLVKAHEVISTALKSLSVFHRERYKLLIRQHALDGLDETTVDVNNPEVALDAMKKNFSENAKGHPFYSELATVVLREDFSANAEKLRAAILREFEESSAPKRCRGAMRNPHAVLLSGFRSLGATSSHFHTALEKIRFNEELVTQSEAAFFSKVVLAFLKAFNIQTRSKDVEIVVVDPATQIQKKECVNVELFQKELARCVKLYRGFVSPDTPIHEKLMALKDEQLFELLFKHVAEAHTLVKQLAGLDEYYKTVRSDVRAKIKGVKIEVTTITTSVTKANKCRAEYASQLEEQKHMKRLGVARA.

This is an uncharacterized protein from Treponema pallidum (strain Nichols).